The chain runs to 605 residues: Granule-bound starch synthase 1, chloroplastic/amyloplastic (605 aa).

A chloroplast-targeting transit peptide spans 1–72 (MAALATSQLV…GGRFPSLVVC (72 aa)). Residue Lys-91 coordinates ADP-alpha-D-glucose.

It belongs to the glycosyltransferase 1 family. Bacterial/plant glycogen synthase subfamily.

The protein localises to the plastid. The protein resides in the chloroplast. It localises to the amyloplast. It carries out the reaction an NDP-alpha-D-glucose + [(1-&gt;4)-alpha-D-glucosyl](n) = [(1-&gt;4)-alpha-D-glucosyl](n+1) + a ribonucleoside 5'-diphosphate + H(+). It functions in the pathway glycan biosynthesis; starch biosynthesis. In terms of biological role, required for the synthesis of amylose in endosperm. In Zea mays (Maize), this protein is Granule-bound starch synthase 1, chloroplastic/amyloplastic (WAXY).